The sequence spans 148 residues: Cathelicidin-1 (148 aa).

The signal sequence occupies residues 1–17 (MLSCWVLLLALLGGACA). A propeptide spanning residues 18–122 (LPAPLGYSQA…TCVDSMADPV (105 aa)) is cleaved from the precursor. 2 cysteine pairs are disulfide-bonded: Cys-75/Cys-86 and Cys-97/Cys-114.

It belongs to the cathelicidin family. In terms of tissue distribution, detected in gizzard, liver, small intestine, large intestine, cloaca, bursa of Fabricius, gall bladder, lung, trachea, kidney, testis and bone marrow.

The protein resides in the secreted. In terms of biological role, binds bacterial lipopolysaccharide (LPS). Has potent antimicrobial activity against Gram-positive and Gram-negative bacteria (in vitro). Has hemolytic activity (in vitro). May play a role in the innate immune response. This chain is Cathelicidin-1 (CATHL1), found in Gallus gallus (Chicken).